Here is an 89-residue protein sequence, read N- to C-terminus: Small ribosomal subunit protein uS15 (89 aa).

Belongs to the universal ribosomal protein uS15 family. In terms of assembly, part of the 30S ribosomal subunit. Forms a bridge to the 50S subunit in the 70S ribosome, contacting the 23S rRNA.

In terms of biological role, one of the primary rRNA binding proteins, it binds directly to 16S rRNA where it helps nucleate assembly of the platform of the 30S subunit by binding and bridging several RNA helices of the 16S rRNA. Its function is as follows. Forms an intersubunit bridge (bridge B4) with the 23S rRNA of the 50S subunit in the ribosome. In Salmonella schwarzengrund (strain CVM19633), this protein is Small ribosomal subunit protein uS15.